The following is a 498-amino-acid chain: Probable deoxyguanosinetriphosphate triphosphohydrolase (498 aa).

One can recognise an HD domain in the interval 71-262; sequence RLTHSLEVQQ…MEAADDISYC (192 aa).

It belongs to the dGTPase family. Type 1 subfamily. Mg(2+) serves as cofactor.

It catalyses the reaction dGTP + H2O = 2'-deoxyguanosine + triphosphate + H(+). In terms of biological role, dGTPase preferentially hydrolyzes dGTP over the other canonical NTPs. This chain is Probable deoxyguanosinetriphosphate triphosphohydrolase, found in Pseudomonas aeruginosa (strain ATCC 15692 / DSM 22644 / CIP 104116 / JCM 14847 / LMG 12228 / 1C / PRS 101 / PAO1).